The chain runs to 1113 residues: StAR-related lipid transfer protein 13 (1113 aa).

Met-1 is modified (N-acetylmethionine). One can recognise an SAM domain in the interval 55–122 (QQEIEAKEAC…LNKCASMKLD (68 aa)). Disordered stretches follow at residues 162–254 (LLPR…PTRA) and 307–346 (PNGD…VSTP). A compositionally biased stretch (polar residues) spans 177-188 (MRNTTSSESVLT). Composition is skewed to low complexity over residues 197 to 213 (SIHS…SQPG) and 326 to 344 (SGKS…SGVS). The residue at position 411 (Ser-411) is a Phosphoserine. Over residues 536–549 (FEGNSVSEGRTTPS) the composition is skewed to polar residues. Residues 536-580 (FEGNSVSEGRTTPSDVERDVTSLNESEPPGVRDRRDSGVGASLTR) are disordered. The region spanning 663–868 (VPLIVHVQRT…HMIMECDRLF (206 aa)) is the Rho-GAP domain. An START domain is found at 899 to 1107 (LEESGATFHT…RNSFQPLIAE (209 aa)).

Homodimer. Interacts with TAX1BP1. In terms of tissue distribution, ubiquitously expressed. Underexpressed in hepatocellular carcinoma cells and some breast cancer cell lines.

The protein resides in the cytoplasm. The protein localises to the membrane. It localises to the mitochondrion membrane. It is found in the lipid droplet. Functionally, GTPase-activating protein for RhoA, and perhaps for Cdc42. May be involved in regulation of cytoskeletal reorganization, cell proliferation and cell motility. Acts a tumor suppressor in hepatocellular carcinoma cells. The chain is StAR-related lipid transfer protein 13 (STARD13) from Homo sapiens (Human).